Here is a 141-residue protein sequence, read N- to C-terminus: Hemoglobin subunit alpha (141 aa).

In terms of domain architecture, Globin spans 1–141; sequence VLSAADKGHV…VSTVLTSKYR (141 aa). Residue Ser-3 is modified to Phosphoserine. An N6-succinyllysine mark is found at Lys-7 and Lys-11. N6-acetyllysine; alternate is present on Lys-16. Lys-16 is modified (N6-succinyllysine; alternate). Phosphotyrosine is present on Tyr-24. Ser-35 carries the post-translational modification Phosphoserine. Lys-40 carries the N6-succinyllysine modification. Residue Ser-49 is modified to Phosphoserine. Residue His-58 participates in O2 binding. Position 87 (His-87) interacts with heme b. A Phosphoserine modification is found at Ser-102. The residue at position 108 (Thr-108) is a Phosphothreonine. Ser-124 carries the post-translational modification Phosphoserine. Phosphothreonine occurs at positions 134 and 137. Ser-138 carries the post-translational modification Phosphoserine.

It belongs to the globin family. As to quaternary structure, heterotetramer of two alpha chains and two beta chains. Red blood cells.

Its function is as follows. Involved in oxygen transport from the lung to the various peripheral tissues. In terms of biological role, hemopressin acts as an antagonist peptide of the cannabinoid receptor CNR1. Hemopressin-binding efficiently blocks cannabinoid receptor CNR1 and subsequent signaling. The protein is Hemoglobin subunit alpha (HBA) of Macropus giganteus (Eastern gray kangaroo).